A 120-amino-acid polypeptide reads, in one-letter code: Large ribosomal subunit protein bL20c (120 aa).

This sequence belongs to the bacterial ribosomal protein bL20 family.

The protein localises to the plastid. In terms of biological role, binds directly to 23S ribosomal RNA and is necessary for the in vitro assembly process of the 50S ribosomal subunit. It is not involved in the protein synthesizing functions of that subunit. The polypeptide is Large ribosomal subunit protein bL20c (rpl20) (Cuscuta gronovii (Common dodder)).